Consider the following 63-residue polypeptide: Protein CYSTEINE-RICH TRANSMEMBRANE MODULE 12 (63 aa).

The disordered stretch occupies residues 1–34 (MQDMRDQNPPQGYPAAEQVSEQPGQDKKKKKPRF). Residues 40–56 (KGDRGFIEGCLFALCCC) form a helical membrane-spanning segment.

The protein belongs to the CYSTM1 family. In terms of assembly, homodimer and heterodimers. Binds weakly to CYSTM4, CYSTM6 and CYSTM7. In terms of tissue distribution, mostly expressed in roots, flowers and siliques and, to a lower extent, in stems and leaves.

Its subcellular location is the cell membrane. The protein resides in the cytoplasm. Its function is as follows. Involved in resistance to abiotic stress. This Arabidopsis thaliana (Mouse-ear cress) protein is Protein CYSTEINE-RICH TRANSMEMBRANE MODULE 12.